The following is a 328-amino-acid chain: NADH-quinone oxidoreductase subunit H 1 (328 aa).

8 consecutive transmembrane segments (helical) span residues 11–31 (VVKAVVLALCVTLAVAVFLLF), 81–101 (LAPVIAFFCALGVWVVIPWAP), 116–136 (VLVILAIAAMGVYGTALGGWA), 154–174 (ISYELAMAMSLLGVILMTGSV), 189–209 (LFPQFLGFLVFYIASLAEAGW), 235–257 (GLFFLTELTHAVNSAVLSTTFFL), 269–289 (IPGFVWFLLKVILMVFVLYWI), and 308–328 (VLLPVAALNLVGTAIYVALWA).

This sequence belongs to the complex I subunit 1 family. NDH-1 is composed of 14 different subunits. Subunits NuoA, H, J, K, L, M, N constitute the membrane sector of the complex.

The protein localises to the cell membrane. The catalysed reaction is a quinone + NADH + 5 H(+)(in) = a quinol + NAD(+) + 4 H(+)(out). In terms of biological role, NDH-1 shuttles electrons from NADH, via FMN and iron-sulfur (Fe-S) centers, to quinones in the respiratory chain. The immediate electron acceptor for the enzyme in this species is believed to be ubiquinone. Couples the redox reaction to proton translocation (for every two electrons transferred, four hydrogen ions are translocated across the cytoplasmic membrane), and thus conserves the redox energy in a proton gradient. This subunit may bind ubiquinone. The polypeptide is NADH-quinone oxidoreductase subunit H 1 (Symbiobacterium thermophilum (strain DSM 24528 / JCM 14929 / IAM 14863 / T)).